The following is a 456-amino-acid chain: SWI/SNF complex component SNF12 homolog (456 aa).

One can recognise an SWIB/MDM2 domain in the interval 234-310 (HVPQKYKVLG…PQLLREHLSP (77 aa)). Residues 435–456 (KQTTPNPTPQQISMAPSTPQTP) are disordered.

This sequence belongs to the SMARCD family. Part of a SWI-SNF complex.

It is found in the nucleus. Functionally, involved in transcriptional activation and repression of select genes by chromatin remodeling (alteration of DNA-nucleosome topology). This is SWI/SNF complex component SNF12 homolog (snf12-1) from Dictyostelium discoideum (Social amoeba).